Here is a 541-residue protein sequence, read N- to C-terminus: Membrane protein insertase YidC (541 aa).

The chain crosses the membrane as a helical span at residues Ser6 to Asp26. The disordered stretch occupies residues Glu34 to Ile56. The next 4 membrane-spanning stretches (helical) occupy residues Phe337–Val357, Leu416–Phe436, Leu454–Leu474, and Pro495–Val515.

The protein belongs to the OXA1/ALB3/YidC family. Type 1 subfamily. As to quaternary structure, interacts with the Sec translocase complex via SecD. Specifically interacts with transmembrane segments of nascent integral membrane proteins during membrane integration.

The protein resides in the cell inner membrane. Functionally, required for the insertion and/or proper folding and/or complex formation of integral membrane proteins into the membrane. Involved in integration of membrane proteins that insert both dependently and independently of the Sec translocase complex, as well as at least some lipoproteins. Aids folding of multispanning membrane proteins. The polypeptide is Membrane protein insertase YidC (Haemophilus influenzae (strain ATCC 51907 / DSM 11121 / KW20 / Rd)).